The following is a 251-amino-acid chain: Hydroxyacylglutathione hydrolase GloB (251 aa).

Residues histidine 53, histidine 55, aspartate 57, histidine 58, histidine 110, and aspartate 127 each coordinate Zn(2+). Residues 136–138 (RLF), 165–167 (HEY), and 245–248 (RSKK) each bind substrate. Zn(2+) is bound at residue histidine 165.

This sequence belongs to the metallo-beta-lactamase superfamily. Glyoxalase II family. In terms of assembly, monomer. Zn(2+) serves as cofactor.

The enzyme catalyses an S-(2-hydroxyacyl)glutathione + H2O = a 2-hydroxy carboxylate + glutathione + H(+). The catalysed reaction is (R)-S-lactoylglutathione + H2O = (R)-lactate + glutathione + H(+). The protein operates within secondary metabolite metabolism; methylglyoxal degradation; (R)-lactate from methylglyoxal: step 2/2. With respect to regulation, is inhibited by Cu(2+). Functionally, type II glyoxalase that catalyzes the hydrolysis of (R)-S-lactoylglutathione to (R)-lactate and glutathione. Is more efficient than the isozyme GloC, and plays a major contribution to methylglyoxal (MG) detoxification in E.coli. The two isoenzymes have additive effects and ensure maximal MG degradation. This Escherichia coli (strain K12) protein is Hydroxyacylglutathione hydrolase GloB.